A 70-amino-acid polypeptide reads, in one-letter code: DNA-directed RNA polymerase subunit omega (70 aa).

Belongs to the RNA polymerase subunit omega family. In terms of assembly, the RNAP catalytic core consists of 2 alpha, 1 beta, 1 beta' and 1 omega subunit. When a sigma factor is associated with the core the holoenzyme is formed, which can initiate transcription.

The catalysed reaction is RNA(n) + a ribonucleoside 5'-triphosphate = RNA(n+1) + diphosphate. Its function is as follows. Promotes RNA polymerase assembly. Latches the N- and C-terminal regions of the beta' subunit thereby facilitating its interaction with the beta and alpha subunits. The chain is DNA-directed RNA polymerase subunit omega from Pelobacter propionicus (strain DSM 2379 / NBRC 103807 / OttBd1).